Reading from the N-terminus, the 876-residue chain is Leucine--tRNA ligase (876 aa).

Positions Pro-42–His-52 match the 'HIGH' region motif. The 'KMSKS' region motif lies at Lys-634–Ser-638. ATP is bound at residue Lys-637.

It belongs to the class-I aminoacyl-tRNA synthetase family.

The protein localises to the cytoplasm. The enzyme catalyses tRNA(Leu) + L-leucine + ATP = L-leucyl-tRNA(Leu) + AMP + diphosphate. This is Leucine--tRNA ligase from Variovorax paradoxus (strain S110).